A 159-amino-acid polypeptide reads, in one-letter code: Ribosome maturation factor RimP (159 aa).

The protein belongs to the RimP family.

Its subcellular location is the cytoplasm. Its function is as follows. Required for maturation of 30S ribosomal subunits. The protein is Ribosome maturation factor RimP of Streptococcus agalactiae serotype III (strain NEM316).